We begin with the raw amino-acid sequence, 171 residues long: ATP synthase subunit b (171 aa).

The chain crosses the membrane as a helical span at residues lysine 3–threonine 23.

This sequence belongs to the ATPase B chain family. In terms of assembly, F-type ATPases have 2 components, F(1) - the catalytic core - and F(0) - the membrane proton channel. F(1) has five subunits: alpha(3), beta(3), gamma(1), delta(1), epsilon(1). F(0) has three main subunits: a(1), b(2) and c(10-14). The alpha and beta chains form an alternating ring which encloses part of the gamma chain. F(1) is attached to F(0) by a central stalk formed by the gamma and epsilon chains, while a peripheral stalk is formed by the delta and b chains.

The protein resides in the cell inner membrane. Functionally, f(1)F(0) ATP synthase produces ATP from ADP in the presence of a proton or sodium gradient. F-type ATPases consist of two structural domains, F(1) containing the extramembraneous catalytic core and F(0) containing the membrane proton channel, linked together by a central stalk and a peripheral stalk. During catalysis, ATP synthesis in the catalytic domain of F(1) is coupled via a rotary mechanism of the central stalk subunits to proton translocation. Component of the F(0) channel, it forms part of the peripheral stalk, linking F(1) to F(0). This Campylobacter hominis (strain ATCC BAA-381 / DSM 21671 / CCUG 45161 / LMG 19568 / NCTC 13146 / CH001A) protein is ATP synthase subunit b.